Consider the following 308-residue polypeptide: Pantothenate kinase (308 aa).

90–97 serves as a coordination point for ATP; that stretch reads GSVAVGKS.

Belongs to the prokaryotic pantothenate kinase family.

The protein resides in the cytoplasm. It carries out the reaction (R)-pantothenate + ATP = (R)-4'-phosphopantothenate + ADP + H(+). The protein operates within cofactor biosynthesis; coenzyme A biosynthesis; CoA from (R)-pantothenate: step 1/5. In Sorangium cellulosum (strain So ce56) (Polyangium cellulosum (strain So ce56)), this protein is Pantothenate kinase.